The primary structure comprises 1067 residues: Probable isoleucine--tRNA ligase, cytoplasmic (1067 aa).

Residues 47–57 (PFATGLPHYGH) carry the 'HIGH' region motif. The 'KMSKS' region motif lies at 604–608 (KMSKR). Lys-607 is a binding site for ATP.

It belongs to the class-I aminoacyl-tRNA synthetase family.

Its subcellular location is the cytoplasm. The catalysed reaction is tRNA(Ile) + L-isoleucine + ATP = L-isoleucyl-tRNA(Ile) + AMP + diphosphate. In Dictyostelium discoideum (Social amoeba), this protein is Probable isoleucine--tRNA ligase, cytoplasmic (ileS).